The following is a 231-amino-acid chain: Adenosine 5'-phosphosulfate reductase (231 aa).

[4Fe-4S] cluster contacts are provided by Cys118, Cys119, Cys201, and Cys204. Cys227 (nucleophile; cysteine thiosulfonate intermediate) is an active-site residue.

The protein belongs to the PAPS reductase family. CysH subfamily. [4Fe-4S] cluster is required as a cofactor.

It localises to the cytoplasm. It carries out the reaction [thioredoxin]-disulfide + sulfite + AMP + 2 H(+) = adenosine 5'-phosphosulfate + [thioredoxin]-dithiol. Its pathway is sulfur metabolism; hydrogen sulfide biosynthesis; sulfite from sulfate. In terms of biological role, catalyzes the formation of sulfite from adenosine 5'-phosphosulfate (APS) using thioredoxin as an electron donor. The chain is Adenosine 5'-phosphosulfate reductase from Halalkalibacterium halodurans (strain ATCC BAA-125 / DSM 18197 / FERM 7344 / JCM 9153 / C-125) (Bacillus halodurans).